Reading from the N-terminus, the 87-residue chain is Putative membrane protein insertion efficiency factor (87 aa).

This sequence belongs to the UPF0161 family.

The protein resides in the cell membrane. Its function is as follows. Could be involved in insertion of integral membrane proteins into the membrane. This is Putative membrane protein insertion efficiency factor from Streptococcus pyogenes serotype M12 (strain MGAS2096).